A 145-amino-acid polypeptide reads, in one-letter code: Large ribosomal subunit protein uL13 (145 aa).

The protein belongs to the universal ribosomal protein uL13 family. In terms of assembly, part of the 50S ribosomal subunit.

Functionally, this protein is one of the early assembly proteins of the 50S ribosomal subunit, although it is not seen to bind rRNA by itself. It is important during the early stages of 50S assembly. This chain is Large ribosomal subunit protein uL13, found in Staphylococcus epidermidis (strain ATCC 35984 / DSM 28319 / BCRC 17069 / CCUG 31568 / BM 3577 / RP62A).